The primary structure comprises 244 residues: 7-cyano-7-deazaguanine synthase (244 aa).

An ATP-binding site is contributed by 19 to 29 (FSGGQDSTTCL). Zn(2+) is bound by residues Cys207, Cys222, Cys225, and Cys228.

Belongs to the QueC family. Zn(2+) serves as cofactor.

The catalysed reaction is 7-carboxy-7-deazaguanine + NH4(+) + ATP = 7-cyano-7-deazaguanine + ADP + phosphate + H2O + H(+). It participates in purine metabolism; 7-cyano-7-deazaguanine biosynthesis. Its function is as follows. Catalyzes the ATP-dependent conversion of 7-carboxy-7-deazaguanine (CDG) to 7-cyano-7-deazaguanine (preQ(0)). This chain is 7-cyano-7-deazaguanine synthase, found in Bordetella avium (strain 197N).